A 456-amino-acid polypeptide reads, in one-letter code: MPQNTLNTVILAAGKGTRMYSQMPKVLHCIGGKPMVERVIDTAAALNPQNICVVVGHGKEQVLDTVKRDAVWVEQTEQLGTGHAVKTALPHLASEGRTLVLYGDVPLIDVETLETLLEAAGNEVGLLTDVPADPAGLGRIIRDGSGSVTAIVEEKDASATQKTIREINTGILVLPNAKLENWLNSLSSNNAQGEYYLTDLIAKAVADGIKVRPVRVRASHLAAGVNNKRQLAELERIFQTEQAQELLKAGVTLRDPARFDLRGRLKHGQDVVIDVNVVIEGEVELGDNVEIGANCVIKNAKIGANSKIAPFSHLEGCEVGENNRIGPYARLRPQARLADDVHVGNFVEIKNAAIGKGTKANHLTYIGDAEVGSKTNFGAGTIIANYDGVHKHKTVIGDEVRIGSNCVLVAPVTLGNKVTTGAGSAITRNIEDNKLALARARQTVIEGWVRPEKNKQ.

The tract at residues 1–228 (MPQNTLNTVI…SHLAAGVNNK (228 aa)) is pyrophosphorylase. UDP-N-acetyl-alpha-D-glucosamine is bound by residues 11–14 (LAAG), K25, Q75, 80–81 (GT), 102–104 (YGD), G138, E153, N168, and N226. Mg(2+) is bound at residue D104. N226 is a binding site for Mg(2+). The tract at residues 229-249 (RQLAELERIFQTEQAQELLKA) is linker. Positions 250–456 (GVTLRDPARF…GWVRPEKNKQ (207 aa)) are N-acetyltransferase. UDP-N-acetyl-alpha-D-glucosamine is bound by residues R332 and K350. The active-site Proton acceptor is the H362. UDP-N-acetyl-alpha-D-glucosamine is bound by residues Y365 and N376. Acetyl-CoA contacts are provided by residues A379, 385 to 386 (NY), S404, A422, and R439.

This sequence in the N-terminal section; belongs to the N-acetylglucosamine-1-phosphate uridyltransferase family. In the C-terminal section; belongs to the transferase hexapeptide repeat family. As to quaternary structure, homotrimer. Requires Mg(2+) as cofactor.

It is found in the cytoplasm. The enzyme catalyses alpha-D-glucosamine 1-phosphate + acetyl-CoA = N-acetyl-alpha-D-glucosamine 1-phosphate + CoA + H(+). The catalysed reaction is N-acetyl-alpha-D-glucosamine 1-phosphate + UTP + H(+) = UDP-N-acetyl-alpha-D-glucosamine + diphosphate. The protein operates within nucleotide-sugar biosynthesis; UDP-N-acetyl-alpha-D-glucosamine biosynthesis; N-acetyl-alpha-D-glucosamine 1-phosphate from alpha-D-glucosamine 6-phosphate (route II): step 2/2. Its pathway is nucleotide-sugar biosynthesis; UDP-N-acetyl-alpha-D-glucosamine biosynthesis; UDP-N-acetyl-alpha-D-glucosamine from N-acetyl-alpha-D-glucosamine 1-phosphate: step 1/1. It participates in bacterial outer membrane biogenesis; LPS lipid A biosynthesis. In terms of biological role, catalyzes the last two sequential reactions in the de novo biosynthetic pathway for UDP-N-acetylglucosamine (UDP-GlcNAc). The C-terminal domain catalyzes the transfer of acetyl group from acetyl coenzyme A to glucosamine-1-phosphate (GlcN-1-P) to produce N-acetylglucosamine-1-phosphate (GlcNAc-1-P), which is converted into UDP-GlcNAc by the transfer of uridine 5-monophosphate (from uridine 5-triphosphate), a reaction catalyzed by the N-terminal domain. In Neisseria gonorrhoeae, this protein is Bifunctional protein GlmU.